The primary structure comprises 219 residues: MLRAGAPTAGSFRTEEVHTGTTIMAVEFDGGVVVGSDSRVSAGAAVVNRVFDKLSPLHQRIFCALSGSAADAQAIADMAAYQLELHGLELEEPPLVLAAANVVKNISYKYREDLLAHLIVAGWDQREGGQVYGTMGGMLIRQPFTIGGSGSSYIYGYVDAAYKPGMTPEECRRFTTNAITLAMNRDGSSGGVIYLVTITAAGVDHRVILGDELPKFYGE.

The propeptide at 1–20 (MLRAGAPTAGSFRTEEVHTG) is removed in mature form. Threonine 21 acts as the Nucleophile in catalysis. Residues lysine 53 and lysine 109 each carry the N6-acetyllysine modification.

It belongs to the peptidase T1B family. As to quaternary structure, the 26S proteasome consists of a 20S proteasome core and two 19S regulatory subunits. The 20S proteasome core is composed of 28 subunits that are arranged in four stacked rings, resulting in a barrel-shaped structure. The two end rings are each formed by seven alpha subunits, and the two central rings are each formed by seven beta subunits. The catalytic chamber with the active sites is on the inside of the barrel. Component of the immunoproteasome, where it displaces the equivalent housekeeping subunit PSMB6. Component of the spermatoproteasome, a form of the proteasome specifically found in testis. Autocleaved. The resulting N-terminal Thr residue of the mature subunit is responsible for the nucleophile proteolytic activity.

It localises to the cytoplasm. The protein resides in the nucleus. It carries out the reaction Cleavage of peptide bonds with very broad specificity.. Its function is as follows. The proteasome is a multicatalytic proteinase complex which is characterized by its ability to cleave peptides with Arg, Phe, Tyr, Leu, and Glu adjacent to the leaving group at neutral or slightly basic pH. The proteasome has an ATP-dependent proteolytic activity. This subunit is involved in antigen processing to generate class I binding peptides. The polypeptide is Proteasome subunit beta type-9 (Psmb9) (Mus terricolor (Earth-colored mouse)).